The chain runs to 469 residues: MASMVLADGMPTVKDDSTRSRGSDVDSFTSTDNVTQINVEAAISENKNEEKPIQDNSEQEFNPHVSIIQRQLNGYVGFASLPNQWHRRCVRQGFNFNVLVLGESGSGKSTLVNTLLNRDVYPPTQKSLTGDFGVNPEPTVMINSSAVEIVENGISLQLNVIDTPGFGDFIDNTDCWQPVLTDIEGRYDQYLELEKHNPRSTIQDPRVHACIFFIQPTGHAISAMELRVMLALHEKVNIIPIIAKADTLTDDELNFTKEMILRDIQYHNIRIFFPPTYETDDPESVAENADIMSRIPFAIIASNTFVVNNEGKRVRGRRYPWGVVEVDNEEHSDFPKLREMLIRTHLEELKEQTNKLYEAYRTERLLSSGISQDHSVFREVNPSAKLEEERALHEEKLMKMEAEMKTIFSQKVQEKEDRLKQSENELRTRHREMKAALEKQKADLIDHKNRLMQAKAAAENEKSKRKFFK.

The tract at residues 1-58 is disordered; sequence MASMVLADGMPTVKDDSTRSRGSDVDSFTSTDNVTQINVEAAISENKNEEKPIQDNSE. The segment covering 13–24 has biased composition (basic and acidic residues); the sequence is VKDDSTRSRGSD. A compositionally biased stretch (polar residues) spans 26–38; sequence DSFTSTDNVTQIN. The 276-residue stretch at 92–367 folds into the Septin-type G domain; the sequence is QGFNFNVLVL…EAYRTERLLS (276 aa). The segment at 102–109 is G1 motif; the sequence is GESGSGKS. GTP-binding positions include 102–109, Thr-139, Gly-165, 244–252, and Arg-317; these read GESGSGKS and KADTLTDDE. The G3 motif stretch occupies residues 162–165; sequence DTPG. Residues 243–246 are G4 motif; sequence AKAD. Residues 383-469 are a coiled coil; sequence SAKLEEERAL…NEKSKRKFFK (87 aa).

Belongs to the TRAFAC class TrmE-Era-EngA-EngB-Septin-like GTPase superfamily. Septin GTPase family. Component of the septin complex composed of two copies of each spn1, spn2, spn3 and spn4.

Its subcellular location is the cytoplasm. It localises to the cell cortex. Its function is as follows. Plays a role in the cell cycle. Involved in a late stage of septum formation leading to the separation of the daughter cells. The polypeptide is Septin homolog spn1 (spn1) (Schizosaccharomyces pombe (strain 972 / ATCC 24843) (Fission yeast)).